A 531-amino-acid chain; its full sequence is Acyl-CoA ligase azaF (531 aa).

188-199 (RLFSSGTTGLPK) is an AMP binding site. Residues 449 to 525 (EVEGVLRNHP…DAIPRNASGK (77 aa)) are AMP-binding.

This sequence belongs to the ATP-dependent AMP-binding enzyme family.

Its pathway is secondary metabolite biosynthesis. Its function is as follows. Acyl-CoA ligase; part of the gene cluster that mediates the biosynthesis of azaphilones, a class of fungal metabolites characterized by a highly oxygenated pyrano-quinone bicyclic core and exhibiting a broad range of bioactivities. In the first step, the non-reducing polyketide synthase azaA forms the hexaketide precursor from successive condensations of five malonyl-CoA units, presumably with a simple acetyl-CoA starter unit. The reactive polyketide chain then undergoes a PT-mediated C2-C7 cyclization to afford the aromatic ring and is eventually released as an aldehyde through the R-domain. The putative ketoreductase azaE is proposed to catalyze the reduction of the terminal ketone resulting in the early culture product FK17-P2a. The monooxygenase azaH was demonstrated to be the only enzyme required to convert FK17-P2a to azanigerone E. AzaH first hydroxylates the benzaldehyde intermediate FK17-P2a at C4, which triggers the formation of the pyran-ring to afford azanigerone E. In parallel, the 2,4-dimethylhexanoyl chain is synthesized by the HR-PKS azaB and is proposed to be transferred to the C4-hydroxyl of azanigerone E by the acyltransferase azaD directly from the ACP domain of azaB. Alternatively, the 2,4-dimethyl-hexanoyl chain may be offloaded from the HR-PKS as a carboxylic acid and converted to an acyl-CoA by azaF. The resulting acyl-CoA molecule could then be taken up as a substrate by AzaD to form azanigerone B. To yield the carboxylic acid substituent in azanigerone A, the hydroxypropyl side chain of azanigerone B would need to undergo a C-C oxidative cleavage catalyzed by cytochrome P450 AzaI. AzaI is proposed to act on a vicinal diol that leads to a C-C bond scission either through an alkoxyradical intermediate or a peroxy complex. In the biosynthesis of azanigerone A, azanigerone B first undergoes hydroxylation at C10, possibly catalyzed by one of the two FAD-dependent monooxygenases encoded in the cluster, azaG or azaL, resulting in the vicinal diol azanigerone C. Oxidative cleavage of azanigerone C by azaI would yield the corresponding aldehyde derivative of azanigerone A. Finally, the dehydrogenase azaJ is proposed to convert the aldehyde functional group into the carboxylic acid, completing the conversion from azanigerone B to azanigerone A. Alternatively, the oxidation of aldehyde to carboxylic acid may be catalyzed by the same P450 enzyme azaI via consecutive oxidation or by endogenous alcohol dehydrogenase. This chain is Acyl-CoA ligase azaF, found in Aspergillus niger (strain ATCC 1015 / CBS 113.46 / FGSC A1144 / LSHB Ac4 / NCTC 3858a / NRRL 328 / USDA 3528.7).